The primary structure comprises 360 residues: Phospho-N-acetylmuramoyl-pentapeptide-transferase (360 aa).

At 1–25 (MLVWLAEHLVKYYSGFNVFSYLTFR) the chain is on the periplasmic side. Residues 26–46 (AIVSLLTALFISLWMGPRMIA) form a helical membrane-spanning segment. Residues 47–71 (HLQKLSFGQVVRNDGPESHFSKRGT) lie on the Cytoplasmic side of the membrane. Residues 72-92 (PTMGGIMILTAIVISVLLWAY) form a helical membrane-spanning segment. A topological domain (periplasmic) is located at residue P93. Residues 94–114 (SNPYVWCVLVVLVGYGVIGFV) form a helical membrane-spanning segment. Topologically, residues 115 to 131 (DDYRKVVRKDTKGLIAR) are cytoplasmic. Residues 132–152 (WKYFWMSVIALGVAFALYLVG) form a helical membrane-spanning segment. The Periplasmic segment spans residues 153 to 167 (KDTPATQLVVPFFKD). A helical transmembrane segment spans residues 168–188 (VMPQLGLFYILLAYFVIVGTG). Over 189-198 (NAVNLTDGLD) the chain is Cytoplasmic. The helical transmembrane segment at 199–219 (GLAIMPTVFVAGGFALVAWAT) threads the bilayer. Over 220–235 (GNMNFASYLHIPYLRH) the chain is Periplasmic. Residues 236–256 (AGELVIVCTAIVGAGLGFLWF) form a helical membrane-spanning segment. Topologically, residues 257–262 (NTYPAQ) are cytoplasmic. The chain crosses the membrane as a helical span at residues 263 to 283 (VFMGDVGSLALGGALGIIAVL). The Periplasmic portion of the chain corresponds to 284–287 (LRQE). The helical transmembrane segment at 288–308 (FLLVIMGGVFVVETLSVILQV) threads the bilayer. Over 309–337 (GSFKLRGQRIFRMAPIHHHYELKGWPEPR) the chain is Cytoplasmic. The helical transmembrane segment at 338–358 (VIVRFWIISLMLVLIGLATLK) threads the bilayer. Over 359 to 360 (VR) the chain is Periplasmic.

Belongs to the glycosyltransferase 4 family. MraY subfamily. Requires Mg(2+) as cofactor.

The protein localises to the cell inner membrane. It catalyses the reaction UDP-N-acetyl-alpha-D-muramoyl-L-alanyl-gamma-D-glutamyl-meso-2,6-diaminopimeloyl-D-alanyl-D-alanine + di-trans,octa-cis-undecaprenyl phosphate = di-trans,octa-cis-undecaprenyl diphospho-N-acetyl-alpha-D-muramoyl-L-alanyl-D-glutamyl-meso-2,6-diaminopimeloyl-D-alanyl-D-alanine + UMP. Its pathway is cell wall biogenesis; peptidoglycan biosynthesis. Functionally, catalyzes the initial step of the lipid cycle reactions in the biosynthesis of the cell wall peptidoglycan: transfers peptidoglycan precursor phospho-MurNAc-pentapeptide from UDP-MurNAc-pentapeptide onto the lipid carrier undecaprenyl phosphate, yielding undecaprenyl-pyrophosphoryl-MurNAc-pentapeptide, known as lipid I. The chain is Phospho-N-acetylmuramoyl-pentapeptide-transferase from Escherichia coli O157:H7.